A 140-amino-acid chain; its full sequence is Large ribosomal subunit protein uL14 (140 aa).

This sequence belongs to the universal ribosomal protein uL14 family.

The protein is Large ribosomal subunit protein uL14 (rpl-23) of Caenorhabditis elegans.